Here is a 330-residue protein sequence, read N- to C-terminus: 2-keto-3-deoxygluconate permease (330 aa).

A run of 10 helical transmembrane segments spans residues 10–30 (VPGG…TFAP), 42–62 (ALIT…GATI), 77–97 (LLLG…QFIP), 100–120 (GIQS…VMNE), 140–160 (GAFA…TFGV), 163–183 (LAAF…LGCI), 200–220 (PAII…GMLI), 224–244 (LLGI…LFLL), 254–274 (VAGV…YALA), and 289–309 (AIIA…TVWV).

The protein belongs to the KdgT transporter family.

It is found in the cell membrane. It catalyses the reaction 2-dehydro-3-deoxy-D-gluconate(in) + H(+)(in) = 2-dehydro-3-deoxy-D-gluconate(out) + H(+)(out). Functionally, catalyzes the proton-dependent uptake of 2-keto-3-deoxygluconate (KDG) into the cell. The sequence is that of 2-keto-3-deoxygluconate permease from Bacillus subtilis (strain 168).